The primary structure comprises 304 residues: Dihydroorotate dehydrogenase B (NAD(+)), catalytic subunit (304 aa).

FMN is bound by residues serine 21 and 45–46; that span reads KA. Substrate is bound by residues lysine 45 and 69 to 73; that span reads NAIGL. Residues asparagine 99 and asparagine 127 each contribute to the FMN site. Asparagine 127 contacts substrate. The Nucleophile role is filled by cysteine 130. FMN contacts are provided by lysine 165 and isoleucine 191. 192–193 is a substrate binding site; it reads NT. FMN is bound by residues glycine 217, 243–244, and 265–266; these read GG and GT.

Belongs to the dihydroorotate dehydrogenase family. Type 1 subfamily. As to quaternary structure, heterotetramer of 2 PyrK and 2 PyrD type B subunits. FMN serves as cofactor.

The protein resides in the cytoplasm. The catalysed reaction is (S)-dihydroorotate + NAD(+) = orotate + NADH + H(+). Its pathway is pyrimidine metabolism; UMP biosynthesis via de novo pathway; orotate from (S)-dihydroorotate (NAD(+) route): step 1/1. In terms of biological role, catalyzes the conversion of dihydroorotate to orotate with NAD(+) as electron acceptor. The polypeptide is Dihydroorotate dehydrogenase B (NAD(+)), catalytic subunit (pyrD) (Shouchella clausii (strain KSM-K16) (Alkalihalobacillus clausii)).